The following is a 498-amino-acid chain: Transcription factor bHLH78 (498 aa).

Disordered regions lie at residues 1–24 (MDNE…FEHQ) and 207–297 (LVSP…PPKD). Polar residues predominate over residues 233–246 (NPISTASPSPSFSK). Positions 259-270 (SSEEKGGKRRRE) are enriched in basic and acidic residues. Residues 271–281 (EEDDEEEEGEG) are compositionally biased toward acidic residues. The 51-residue stretch at 307-357 (QATDSHSLAERVRREKIGERMKLLQDLVPGCNKVTGKALMLDEIINYVQSL) folds into the bHLH domain.

In terms of assembly, homodimer. Binds reversibly to CRY2 after blue light illumination. Expressed constitutively in roots, leaves, stems, and flowers.

The protein resides in the nucleus. Its function is as follows. Transcription factor that binds DNA to G box 5'-CACGTG-3' and to E-box 5'-CANNTG-3'. Binds to chromatin DNA of the FT gene and promotes its expression, and thus triggers flowering in response to blue light. The sequence is that of Transcription factor bHLH78 (BHLH78) from Arabidopsis thaliana (Mouse-ear cress).